Here is a 181-residue protein sequence, read N- to C-terminus: Large ribosomal subunit protein uL6m (181 aa).

Belongs to the universal ribosomal protein uL6 family.

It localises to the mitochondrion. The polypeptide is Large ribosomal subunit protein uL6m (RPL6) (Acanthamoeba castellanii (Amoeba)).